Consider the following 537-residue polypeptide: Phosphoenolpyruvate carboxykinase (ATP) (537 aa).

Positions 61, 195, and 201 each coordinate substrate. ATP contacts are provided by residues Lys201, His220, and 236–244 (GLSGTGKTT). The Mn(2+) site is built by Lys201 and His220. Asp257 is a binding site for Mn(2+). Residue Glu285 coordinates ATP. Basic and acidic residues predominate over residues 312 to 321 (DFNDGSKTEN). The tract at residues 312-339 (DFNDGSKTENTRSAYPLESIPNASPTGR) is disordered. Arg323 contacts substrate. ATP is bound by residues Arg323 and Thr448.

This sequence belongs to the phosphoenolpyruvate carboxykinase (ATP) family. Requires Mn(2+) as cofactor.

Its subcellular location is the cytoplasm. It catalyses the reaction oxaloacetate + ATP = phosphoenolpyruvate + ADP + CO2. It functions in the pathway carbohydrate biosynthesis; gluconeogenesis. Involved in the gluconeogenesis. Catalyzes the conversion of oxaloacetate (OAA) to phosphoenolpyruvate (PEP) through direct phosphoryl transfer between the nucleoside triphosphate and OAA. This is Phosphoenolpyruvate carboxykinase (ATP) from Rhodopseudomonas palustris (strain BisB18).